Here is a 302-residue protein sequence, read N- to C-terminus: Coiled-coil domain-containing protein 2 (302 aa).

An N-terminal signal peptide occupies residues 1 to 22; the sequence is MKNFGLLVVCLSLATLVIPSDG. Residues 198–234 are a coiled coil; it reads FADAMEKKAEALENAAEAAAEYISDQSEEVDDLSEEV. The tract at residues 221 to 257 is disordered; the sequence is SDQSEEVDDLSEEVLDDDSDENDSTSSESEVEDSDVD. Residues 223-257 show a composition bias toward acidic residues; sequence QSEEVDDLSEEVLDDDSDENDSTSSESEVEDSDVD. N-linked (GlcNAc...) asparagine glycosylation occurs at N242.

As to expression, component of the acid-insoluble organic matrix of calcified layers of the shell (at protein level).

Its subcellular location is the secreted. The polypeptide is Coiled-coil domain-containing protein 2 (Lottia gigantea (Giant owl limpet)).